We begin with the raw amino-acid sequence, 168 residues long: Cell division inhibitor SulA (168 aa).

Residues 105 to 111 (ALETGNY) form a ftsZ binding region. The lon protease binding stretch occupies residues 161-168 (RIHSGMVH).

This sequence belongs to the SulA family. As to quaternary structure, interacts with FtsZ. Is rapidly cleaved and degraded by the Lon protease once DNA damage is repaired.

Component of the SOS system and an inhibitor of cell division. Accumulation of SulA causes rapid cessation of cell division and the appearance of long, non-septate filaments. In the presence of GTP, binds a polymerization-competent form of FtsZ in a 1:1 ratio, thus inhibiting FtsZ polymerization and therefore preventing it from participating in the assembly of the Z ring. This mechanism prevents the premature segregation of damaged DNA to daughter cells during cell division. This Cronobacter sakazakii (strain ATCC BAA-894) (Enterobacter sakazakii) protein is Cell division inhibitor SulA.